The chain runs to 320 residues: GRAM domain-containing protein 2A (320 aa).

The interval 33 to 56 (TEKPGKVQEPPDDGSLHWSEGSKG) is disordered. In terms of domain architecture, GRAM spans 74 to 141 (QQYHKLFKDI…VSVQLIKKHK (68 aa)). A helical transmembrane segment spans residues 278–298 (LLKVIFVMICFLVLSSSYLAF).

Phosphorylated.

The protein localises to the endoplasmic reticulum membrane. It is found in the cell membrane. Participates in the organization ofendoplasmic reticulum-plasma membrane contact sites (EPCS) with pleiotropic functions including STIM1 recruitment and calcium homeostasis. Constitutive tether that co-localize with ESYT2/3 tethers at endoplasmic reticulum-plasma membrane contact sites in a phosphatidylinositol lipid-dependent manner. Pre-marks the subset of phosphtidylinositol 4,5-biphosphate (PI(4,5)P2)-enriched EPCS destined for the store operated calcium entry pathway (SOCE). The polypeptide is GRAM domain-containing protein 2A (Mus musculus (Mouse)).